A 129-amino-acid chain; its full sequence is Small ribosomal subunit protein uS11 (129 aa).

Belongs to the universal ribosomal protein uS11 family. As to quaternary structure, part of the 30S ribosomal subunit. Interacts with proteins S7 and S18. Binds to IF-3.

Its function is as follows. Located on the platform of the 30S subunit, it bridges several disparate RNA helices of the 16S rRNA. Forms part of the Shine-Dalgarno cleft in the 70S ribosome. The chain is Small ribosomal subunit protein uS11 from Mycoplasma mycoides subsp. mycoides SC (strain CCUG 32753 / NCTC 10114 / PG1).